The following is a 314-amino-acid chain: MAFATRQLVRSLSSSSTAAASAKKILVKHVTVIGGGLMGAGIAQVAAATGHTVVLVDQTEDILAKSKKGIEESLRKVAKKKFAENPKAGDEFVEKTLSSISTSTDAASVVHSTDLVVEAIVENLKVKSELFKRLDKFAAEHTIFASNTSSLQITSLANATTRQDRFAGLHFFNPVPLMKLVEVVKTPMTSQKTLESLVDFSKTLGKHPVSCKDTPGFIVNRLLVPYLIEAVRLYERGDASKEDIDTAMKLGAGYPMGPFELLDYVGLDTTKFIIDGWHEMDSQNPLFQPSPAMNKLVAENKFGKKTGEGFYKYK.

Residues 1–12 constitute a mitochondrion transit peptide; that stretch reads MAFATRQLVRSL. NAD(+) is bound by residues 34–39 and Asp-57; that span reads GGGLMG. Ser-73 and Lys-80 together coordinate CoA. Lys-80 is modified (N6-succinyllysine). 2 positions are modified to N6-acetyllysine; alternate: Lys-81 and Lys-87. N6-succinyllysine; alternate is present on residues Lys-81 and Lys-87. Residue Glu-122 coordinates NAD(+). Lys-125 bears the N6-acetyllysine mark. Lys-127 contributes to the NAD(+) binding site. N6-(2-hydroxyisobutyryl)lysine is present on Lys-127. An N6-acetyllysine; alternate modification is found at Lys-136. At Lys-136 the chain carries N6-succinyllysine; alternate. The NAD(+) site is built by Ser-149 and Asn-173. Ser-149 provides a ligand contact to CoA. Lys-179 is subject to N6-acetyllysine. Residues Lys-185, Lys-192, and Lys-202 each carry the N6-acetyllysine; alternate modification. N6-succinyllysine; alternate occurs at positions 185, 192, and 202. Lys-206 is modified (N6-succinyllysine). Lys-212 and Lys-241 each carry N6-acetyllysine; alternate. N6-succinyllysine; alternate occurs at positions 212 and 241. Lys-305 is a binding site for NAD(+). Lys-312 is modified (N6-acetyllysine; alternate). The residue at position 312 (Lys-312) is an N6-succinyllysine; alternate.

Belongs to the 3-hydroxyacyl-CoA dehydrogenase family. As to quaternary structure, homodimer. Interacts with GLUD1; this interaction inhibits the activation of glutamate dehydrogenase 1 (GLUD1). In terms of processing, succinylation at Lys-81, adjacent to a coenzyme A binding site. Desuccinylated by SIRT5.

It is found in the mitochondrion matrix. The catalysed reaction is a (3S)-3-hydroxyacyl-CoA + NAD(+) = a 3-oxoacyl-CoA + NADH + H(+). It catalyses the reaction (3S)-3-hydroxybutanoyl-CoA + NAD(+) = acetoacetyl-CoA + NADH + H(+). The enzyme catalyses (3S)-hydroxydecanoyl-CoA + NAD(+) = 3-oxodecanoyl-CoA + NADH + H(+). It carries out the reaction (3S)-hydroxyhexadecanoyl-CoA + NAD(+) = 3-oxohexadecanoyl-CoA + NADH + H(+). The protein operates within lipid metabolism; fatty acid beta-oxidation. Mitochondrial fatty acid beta-oxidation enzyme that catalyzes the third step of the beta-oxidation cycle for medium and short-chain 3-hydroxy fatty acyl-CoAs (C4 to C10). Plays a role in the control of insulin secretion by inhibiting the activation of glutamate dehydrogenase 1 (GLUD1), an enzyme that has an important role in regulating amino acid-induced insulin secretion. Plays a role in the maintenance of normal spermatogenesis through the reduction of fatty acid accumulation in the testes. The chain is Hydroxyacyl-coenzyme A dehydrogenase, mitochondrial (HADH) from Sus scrofa (Pig).